The sequence spans 395 residues: WW domain-containing transcription regulator protein 1 (395 aa).

K46 participates in a covalent cross-link: Glycyl lysine isopeptide (Lys-Gly) (interchain with G-Cter in ubiquitin). The interval 52 to 116 (FFKEPDSGSH…AQQHAHLRQQ (65 aa)) is disordered. Residues 61–70 (HSRQSSTDSS) are compositionally biased toward polar residues. S62 is modified (phosphoserine). A Phosphoserine; by LATS2 modification is found at S89. In terms of domain architecture, WW spans 124 to 157 (LPLPPGWEMTFTATGQRYFLNHIEKITTWQDPRK). The segment at 221–395 (PNALTTQQQQ…NKSEPFLTWL (175 aa)) is required for interaction with PALS1. A coiled-coil region spans residues 224–258 (LTTQQQQQQKLRLQRIQMERERIRMRQEELMRQEA). The span at 277 to 293 (PAMSTDMRSVTNSSSDP) shows a compositional bias: polar residues. Residues 277 to 308 (PAMSTDMRSVTNSSSDPFLNGGPYHSREQSTD) form a disordered region. S290 carries the phosphoserine modification. The residue at position 306 (S306) is a Phosphoserine; by LATS2. Positions 389 to 395 (EPFLTWL) match the PDZ-binding motif.

In terms of assembly, binds to SLC9A3R2 via the PDZ motif at the plasma membrane. Binds to YWHAZ in vivo and in vitro through the phosphoserine-binding motif RSHSSP. Interacts (via coiled-coil domain) with SMAD2 (via MH1 domain), SMAD3 and SMAD4. Interacts with MED15. Interacts with PAX8 and NKX2-1. Interacts with TEAD1, TEAD2, TEAD3 and TEAD4. Interacts (via WW domain) with PALS1. Interacts with LATS1. Interacts with YAP1 (when phosphorylated at 'Ser-112'). Interacts (via WW domain) with PRRG4 (via cytoplasmic domain). Interacts (via WW domain) with AMOTL2 (via PPXY motif); the interaction promotes WWTR1/TAZ localization to the cytoplasm and tight junctions, thereby inhibiting its transcriptional coactivator properties. Interacts (via WW domain) with AMOT; the interaction facilitates translocation of WWTR1/TAZ to the cytoplasm. In terms of processing, phosphorylated by LATS2 and STK3/MST2. Phosphorylation by LATS2 results in creation of 14-3-3 binding sites, retention in the cytoplasm, and functional inactivation. Phosphorylation results in the inhibition of transcriptional coactivation through YWHAZ-mediated nuclear export. Ubiquitinated at Lys-46; leading to proteasomal degradation. Deubiquitinated and stabilized by UCHL1 at Lys-46; leading to inhibition of osteoclastogenesis. Highly expressed in kidney, heart, placenta and lung.

It localises to the nucleus. It is found in the cytoplasm. Its subcellular location is the cell membrane. The protein localises to the cell junction. The protein resides in the tight junction. Transcriptional coactivator which acts as a downstream regulatory target in the Hippo signaling pathway that plays a pivotal role in organ size control and tumor suppression by restricting proliferation and promoting apoptosis. The core of this pathway is composed of a kinase cascade wherein STK3/MST2 and STK4/MST1, in complex with its regulatory protein SAV1, phosphorylates and activates LATS1/2 in complex with its regulatory protein MOB1, which in turn phosphorylates and inactivates YAP1 oncoprotein and WWTR1/TAZ. WWTR1 enhances PAX8 and NKX2-1/TTF1-dependent gene activation. In conjunction with YAP1, involved in the regulation of TGFB1-dependent SMAD2 and SMAD3 nuclear accumulation. Plays a key role in coupling SMADs to the transcriptional machinery such as the mediator complex. Regulates embryonic stem-cell self-renewal, promotes cell proliferation and epithelial-mesenchymal transition. This Mus musculus (Mouse) protein is WW domain-containing transcription regulator protein 1.